Reading from the N-terminus, the 379-residue chain is Cytochrome b (379 aa).

4 helical membrane-spanning segments follow: residues 34-54, 78-99, 114-134, and 179-199; these read FGSL…LLAM, WLIR…YFHI, WNTG…GYVL, and FFAL…IHLT. Histidine 84 and histidine 98 together coordinate heme b. Positions 183 and 197 each coordinate heme b. Histidine 202 contacts a ubiquinone. 4 helical membrane-spanning segments follow: residues 227 to 247, 289 to 309, 321 to 341, and 348 to 368; these read LKDI…TFFS, LGGV…PLLH, FSQV…WVGS, and FIAI…VLFP.

It belongs to the cytochrome b family. The cytochrome bc1 complex contains 11 subunits: 3 respiratory subunits (MT-CYB, CYC1 and UQCRFS1), 2 core proteins (UQCRC1 and UQCRC2) and 6 low-molecular weight proteins (UQCRH/QCR6, UQCRB/QCR7, UQCRQ/QCR8, UQCR10/QCR9, UQCR11/QCR10 and a cleavage product of UQCRFS1). This cytochrome bc1 complex then forms a dimer. Heme b serves as cofactor.

The protein localises to the mitochondrion inner membrane. Functionally, component of the ubiquinol-cytochrome c reductase complex (complex III or cytochrome b-c1 complex) that is part of the mitochondrial respiratory chain. The b-c1 complex mediates electron transfer from ubiquinol to cytochrome c. Contributes to the generation of a proton gradient across the mitochondrial membrane that is then used for ATP synthesis. This is Cytochrome b (MT-CYB) from Apteryx australis (Southern brown kiwi).